Reading from the N-terminus, the 374-residue chain is Alanine racemase (374 aa).

K44 functions as the Proton acceptor; specific for D-alanine in the catalytic mechanism. K44 is subject to N6-(pyridoxal phosphate)lysine. R139 is a binding site for substrate. The Proton acceptor; specific for L-alanine role is filled by Y269. M317 provides a ligand contact to substrate.

Belongs to the alanine racemase family. It depends on pyridoxal 5'-phosphate as a cofactor.

The enzyme catalyses L-alanine = D-alanine. It participates in amino-acid biosynthesis; D-alanine biosynthesis; D-alanine from L-alanine: step 1/1. Catalyzes the interconversion of L-alanine and D-alanine. May also act on other amino acids. The protein is Alanine racemase (alr) of Bordetella avium (strain 197N).